We begin with the raw amino-acid sequence, 884 residues long: Kinesin-like protein KIN-7C (884 aa).

The 323-residue stretch at 33–355 (RIQVLVRLRP…LLFGSCAKEV (323 aa)) folds into the Kinesin motor domain. Residue 119–126 (GQTSSGKT) coordinates ATP. Residues 364–435 (VMSDKALVKH…LQDLLQSVGD (72 aa)) adopt a coiled-coil conformation. Residues 434–530 (GDHDLNRQVQ…VNSRHSRPSG (97 aa)) are disordered. Over residues 449–460 (RSPPSVGMPPSV) the composition is skewed to low complexity. Residues 461-483 (SRDDSSQVSHDDSDLYKEVRCIE) are compositionally biased toward basic and acidic residues. Residues 498–523 (GESSSPQDSNMNSGLHGNDSNASVNS) are compositionally biased toward polar residues.

This sequence belongs to the TRAFAC class myosin-kinesin ATPase superfamily. Kinesin family. KIN-7 subfamily.

This chain is Kinesin-like protein KIN-7C, found in Oryza sativa subsp. japonica (Rice).